A 243-amino-acid polypeptide reads, in one-letter code: Killer cell lectin-like receptor subfamily I member 1 (243 aa).

The Cytoplasmic portion of the chain corresponds to 1–80 (MPHSKHRDYT…RQGPKSAVWR (80 aa)). Short sequence motifs (ITIM motif) lie at residues 16 to 21 (IPYTEL) and 47 to 52 (LKYAEL). A helical; Signal-anchor for type II membrane protein membrane pass occupies residues 81–101 (VVTCVLGVLCVVLMITMGILV). Over 102–243 (PKLFSGQEEQ…KPYACEFNKM (142 aa)) the chain is Extracellular. N-linked (GlcNAc...) asparagine glycosylation is found at Asn123, Asn191, Asn194, Asn200, and Asn214. The 103-residue stretch at 137–239 (FGNNFYLFFR…CSSKKPYACE (103 aa)) folds into the C-type lectin domain. 2 cysteine pairs are disulfide-bonded: Cys158–Cys238 and Cys217–Cys230.

As to quaternary structure, heterodimer with KLRE1. Interacts with PTPN6. In terms of tissue distribution, expressed in natural killer (NK) cells.

The protein resides in the cell membrane. Lectin-like receptor for natural killer (NK) cells. Heterodimer formation with KLRE1 mediates inhibition of NK cell cytolytic activity. This chain is Killer cell lectin-like receptor subfamily I member 1, found in Rattus norvegicus (Rat).